Reading from the N-terminus, the 672-residue chain is DNA mismatch repair protein MutL (672 aa).

The segment covering 443-454 (SYTSDSNQYENS) has biased composition (polar residues). A disordered region spans residues 443-469 (SYTSDSNQYENSCKSDVDKESKSKTTG). The span at 455–465 (CKSDVDKESKS) shows a compositional bias: basic and acidic residues.

This sequence belongs to the DNA mismatch repair MutL/HexB family.

Its function is as follows. This protein is involved in the repair of mismatches in DNA. It is required for dam-dependent methyl-directed DNA mismatch repair. May act as a 'molecular matchmaker', a protein that promotes the formation of a stable complex between two or more DNA-binding proteins in an ATP-dependent manner without itself being part of a final effector complex. In Clostridium botulinum (strain Eklund 17B / Type B), this protein is DNA mismatch repair protein MutL.